The chain runs to 31 residues: Photosystem II reaction center protein T (31 aa).

Residues 3–23 form a helical membrane-spanning segment; it reads SFAYVLILTFAIATLFFAIAF.

The protein belongs to the PsbT family. In terms of assembly, PSII is composed of 1 copy each of membrane proteins PsbA, PsbB, PsbC, PsbD, PsbE, PsbF, PsbH, PsbI, PsbJ, PsbK, PsbL, PsbM, PsbT, PsbX, PsbY, PsbZ, Psb30/Ycf12, peripheral proteins PsbO, CyanoQ (PsbQ), PsbU, PsbV and a large number of cofactors. It forms dimeric complexes.

The protein resides in the cellular thylakoid membrane. Found at the monomer-monomer interface of the photosystem II (PS II) dimer, plays a role in assembly and dimerization of PSII. PSII is a light-driven water plastoquinone oxidoreductase, using light energy to abstract electrons from H(2)O, generating a proton gradient subsequently used for ATP formation. The protein is Photosystem II reaction center protein T of Synechococcus sp. (strain CC9902).